A 261-amino-acid chain; its full sequence is Nickel import ATP-binding protein NikD (261 aa).

In terms of domain architecture, ABC transporter spans 6-248 (LRIEGLTIAT…PRHDATRALV (243 aa)). Residue 41–48 (GASGSGKS) participates in ATP binding.

It belongs to the ABC transporter superfamily. Nickel importer (TC 3.A.1.5.3) family. In terms of assembly, the complex is composed of two ATP-binding proteins (NikD and NikE), two transmembrane proteins (NikB and NikC) and a solute-binding protein (NikA).

The protein resides in the cell inner membrane. It catalyses the reaction Ni(2+)(out) + ATP + H2O = Ni(2+)(in) + ADP + phosphate + H(+). Its function is as follows. Part of the ABC transporter complex NikABCDE involved in nickel import. Responsible for energy coupling to the transport system. This Rhodospirillum rubrum (strain ATCC 11170 / ATH 1.1.1 / DSM 467 / LMG 4362 / NCIMB 8255 / S1) protein is Nickel import ATP-binding protein NikD.